A 70-amino-acid polypeptide reads, in one-letter code: MIFKVFYQEKMTEVPVRENTKVLYLEADSERDVRAKLKKFAYNIEFVQSVTGAHLEYEKQNADLKLTEIV.

It belongs to the RNA polymerase subunit epsilon family. In terms of assembly, RNAP is composed of a core of 2 alpha, a beta and a beta' subunit. The core is associated with a delta subunit, and at least one of epsilon or omega. When a sigma factor is associated with the core the holoenzyme is formed, which can initiate transcription.

It carries out the reaction RNA(n) + a ribonucleoside 5'-triphosphate = RNA(n+1) + diphosphate. A non-essential component of RNA polymerase (RNAP). The protein is DNA-directed RNA polymerase subunit epsilon of Bacillus cytotoxicus (strain DSM 22905 / CIP 110041 / 391-98 / NVH 391-98).